The following is a 554-amino-acid chain: uncharacterized protein (554 aa).

Disordered regions lie at residues 1–127 (MTTH…NYND), 139–173 (IEDDEEYEEIGDEESSSGIGGDSEFNDSLNGSKAG), 293–395 (NNNN…PLSE), and 416–509 (FGFS…RKIR). 3 stretches are compositionally biased toward low complexity: residues 9–30 (SSSNSSSNNINNNNNNNNNNNI), 46–55 (DPTSSSSPTN), and 63–125 (SNSN…LINY). Residues 139-153 (IEDDEEYEEIGDEES) show a composition bias toward acidic residues. A compositionally biased stretch (polar residues) spans 164 to 173 (NDSLNGSKAG). Composition is skewed to low complexity over residues 293–387 (NNNN…CSSN), 416–449 (FGFSLSSPTTSSSNNSSNNNNNNNNSNQFFSSIS), and 461–484 (SPPLQSLQSIQPPISQLNNNNNNH). Basic residues predominate over residues 485-508 (HNNHHQNHHHQNHNHQHHSKKRKI).

This is an uncharacterized protein from Dictyostelium discoideum (Social amoeba).